Here is a 343-residue protein sequence, read N- to C-terminus: Mas-related G-protein coupled receptor member F (343 aa).

At M1 to P44 the chain is on the extracellular side. N4 is a glycosylation site (N-linked (GlcNAc...) asparagine). A helical transmembrane segment spans residues A45–L66. Residues W67–F82 lie on the Cytoplasmic side of the membrane. Residues L83 to M104 form a helical membrane-spanning segment. Over G105–G123 the chain is Extracellular. Residues L124 to S144 form a helical membrane-spanning segment. The Cytoplasmic portion of the chain corresponds to V145–S160. Residues A161–F181 traverse the membrane as a helical segment. Over C182–D198 the chain is Extracellular. Residues I199–L220 form a helical membrane-spanning segment. The Cytoplasmic portion of the chain corresponds to I221 to V241. A helical membrane pass occupies residues L242–W263. Residues V264 to E273 lie on the Extracellular side of the membrane. Residues Y274–A294 traverse the membrane as a helical segment. Topologically, residues G295 to S343 are cytoplasmic. A disordered region spans residues A318–S343. The span at A324 to S343 shows a compositional bias: polar residues.

Belongs to the G-protein coupled receptor 1 family. Mas subfamily.

The protein localises to the cell membrane. In terms of biological role, orphan receptor. May bind to a neuropeptide and may regulate nociceptor function and/or development, including the sensation or modulation of pain. This Mus musculus (Mouse) protein is Mas-related G-protein coupled receptor member F (Mrgprf).